An 89-amino-acid polypeptide reads, in one-letter code: Acylphosphatase (89 aa).

Positions 3-89 constitute an Acylphosphatase-like domain; that stretch reads CKRWILYGRV…GNYGSFHIEY (87 aa). Active-site residues include Arg18 and Asn36.

Belongs to the acylphosphatase family.

The enzyme catalyses an acyl phosphate + H2O = a carboxylate + phosphate + H(+). In Petrotoga mobilis (strain DSM 10674 / SJ95), this protein is Acylphosphatase (acyP).